A 105-amino-acid polypeptide reads, in one-letter code: Antimicrobial peptide 1 (105 aa).

The signal sequence occupies residues 1–26 (METKRLAYVMFVLVCLFLAMAQPSQA). Intrachain disulfides connect Cys-37-Cys-93, Cys-47-Cys-105, and Cys-49-Cys-77.

In terms of tissue distribution, detected at higher levels in needles and twigs from canker-resistant seedlings than in needles from canker-susceptible plants. During summer, detected on cankered, healthy and marginal bark. During winter, detected at lower levels in cankered bark and bark from the canker margin than in healthy bark (at protein level).

Its subcellular location is the secreted. The protein resides in the cell wall. Its function is as follows. Antimicrobial peptide. The chain is Antimicrobial peptide 1 from Pinus monticola (Western white pine).